Consider the following 521-residue polypeptide: RING-type E3 ubiquitin-protein ligase PPIL2 (521 aa).

Residues 35–108 form the U-box domain; it reads RRLPFDHCSL…GQYHCPVLYS (74 aa). The stretch at 197–217 forms a coiled coil; it reads LKNTNSETRETLQELYKEFKG. K216 is covalently cross-linked (Glycyl lysine isopeptide (Lys-Gly) (interchain with G-Cter in SUMO2)). A PPIase cyclophilin-type domain is found at 278–433; that stretch reads KKGYVRLHTN…EEVLICTTTV (156 aa). The segment covering 447–462 has biased composition (basic and acidic residues); the sequence is QERKKTQHQVDPEAKV. The tract at residues 447–521 is disordered; that stretch reads QERKKTQHQV…SRGFGDFSSW (75 aa). Over residues 465-478 the composition is skewed to polar residues; it reads SQPQPGNQGPQTYR. K483 is modified (N6-acetyllysine).

This sequence belongs to the cyclophilin-type PPIase family. PPIL2 subfamily. As to quaternary structure, component of the minor spliceosome, which splices U12-type introns. Within this complex, interacts with PRPF8/PRP8, EFTUD2/SNU114 and PLRG1. Interacts with isoform 2 of BSG. Interacts (via the PPIase cyclophilin-type domain) with CRNKL1; they may form a trimeric complex with HSP90.

The protein resides in the nucleus. It carries out the reaction S-ubiquitinyl-[E2 ubiquitin-conjugating enzyme]-L-cysteine + [acceptor protein]-L-lysine = [E2 ubiquitin-conjugating enzyme]-L-cysteine + N(6)-ubiquitinyl-[acceptor protein]-L-lysine.. It participates in protein modification; protein ubiquitination. In terms of biological role, has a ubiquitin-protein ligase activity acting as an E3 ubiquitin protein ligase or as an ubiquitin-ubiquitin ligase promoting elongation of ubiquitin chains on substrates. By mediating 'Lys-48'-linked polyubiquitination of proteins could target them for proteasomal degradation. May also function as a chaperone, playing a role in transport to the cell membrane of BSG/Basigin for instance. Probable inactive PPIase with no peptidyl-prolyl cis-trans isomerase activity. As a component of the minor spliceosome, involved in the splicing of U12-type introns in pre-mRNAs. The sequence is that of RING-type E3 ubiquitin-protein ligase PPIL2 from Mus musculus (Mouse).